The primary structure comprises 671 residues: Putative protein kinase C delta type homolog (671 aa).

The interval M1–H136 is disordered. Low complexity predominate over residues S14 to S27. Basic and acidic residues predominate over residues A57–R101. Residues S102–V116 are compositionally biased toward gly residues. 2 consecutive Phorbol-ester/DAG-type zinc fingers follow at residues G144–C194 and P216–C266. One can recognise a Protein kinase domain in the interval F343–F601. ATP contacts are provided by residues L349–V357 and K372. The Proton acceptor role is filled by D467. Residues R602 to D671 enclose the AGC-kinase C-terminal domain.

This sequence belongs to the protein kinase superfamily. AGC Ser/Thr protein kinase family. PKC subfamily.

The catalysed reaction is L-seryl-[protein] + ATP = O-phospho-L-seryl-[protein] + ADP + H(+). It carries out the reaction L-threonyl-[protein] + ATP = O-phospho-L-threonyl-[protein] + ADP + H(+). This is Putative protein kinase C delta type homolog from Drosophila melanogaster (Fruit fly).